A 419-amino-acid chain; its full sequence is Putative zinc metalloprotease SPy_1963/M5005_Spy1674 (419 aa).

His18 is a binding site for Zn(2+). Glu19 is an active-site residue. Residue His22 participates in Zn(2+) binding. The next 4 helical transmembrane spans lie at 169-191 (LITN…ILLV), 301-323 (LAWS…FSLN), 343-365 (LESV…LIPI), and 392-411 (AYIT…AVTW). Residues 175–274 (GPMNNFILGI…LKTVAVKPQK (100 aa)) enclose the PDZ domain.

The protein belongs to the peptidase M50B family. Requires Zn(2+) as cofactor.

It localises to the cell membrane. The protein is Putative zinc metalloprotease SPy_1963/M5005_Spy1674 of Streptococcus pyogenes serotype M1.